Reading from the N-terminus, the 89-residue chain is Small ribosomal subunit protein uS14A (89 aa).

This sequence belongs to the universal ribosomal protein uS14 family. In terms of assembly, part of the 30S ribosomal subunit. Contacts proteins S3 and S10.

Functionally, binds 16S rRNA, required for the assembly of 30S particles and may also be responsible for determining the conformation of the 16S rRNA at the A site. The polypeptide is Small ribosomal subunit protein uS14A (Lactococcus lactis subsp. lactis (strain IL1403) (Streptococcus lactis)).